The primary structure comprises 611 residues: Actin-related protein 5 (611 aa).

Coiled coils occupy residues 290–329 and 355–386; these read TLTS…LDRL and SAEE…NIEV.

Belongs to the actin family. ARP5 subfamily. Component of the chromatin remodeling INO80 complex.

It localises to the nucleus. Functionally, proposed core component of the chromatin remodeling INO80 complex which is involved in transcriptional regulation, DNA replication and probably DNA repair. This is Actin-related protein 5 (ACTR5) from Gallus gallus (Chicken).